We begin with the raw amino-acid sequence, 571 residues long: uncharacterized protein (571 aa).

Helical transmembrane passes span Val10–Gly29, Val36–Phe55, Trp65–Leu87, Ala96–Phe118, and Ala166–Leu188. Residues Thr294–Phe378 enclose the RCK C-terminal domain. The next 6 helical transmembrane spans lie at Leu388–Val406, Val411–Ser433, Leu446–Ala465, Leu480–Leu502, Leu509–Leu531, and Val546–Ala568.

It belongs to the AAE transporter (TC 2.A.81) family.

Its subcellular location is the cell membrane. This is an uncharacterized protein from Bordetella bronchiseptica (strain ATCC BAA-588 / NCTC 13252 / RB50) (Alcaligenes bronchisepticus).